An 819-amino-acid polypeptide reads, in one-letter code: Protein O-mannosyl-transferase tmem260 (819 aa).

Over residues 1–10 the composition is skewed to polar residues; sequence MNNSPTLSNT. Positions 1–68 are disordered; the sequence is MNNSPTLSNT…NNNNNIINVN (68 aa). A compositionally biased stretch (low complexity) spans 15-68; sequence NNNNNSNSNSNSNNNNNNNNNNNNNSNNNNNNNNNVNRNVNNRNNNNNNIINVN. 3 N-linked (GlcNAc...) asparagine glycosylation sites follow: Asn18, Asn38, and Asn70. Helical transmembrane passes span 113 to 133, 152 to 172, 185 to 205, 210 to 230, 232 to 252, 285 to 305, and 316 to 336; these read IACI…TQYP, VAHP…SHII, FMSS…VYLW, WCGL…MYQI, GEVF…GVWY, LTNQ…LMFI, and ILSN…LLFI. Asn349 is a glycosylation site (N-linked (GlcNAc...) asparagine). A run of 4 helical transmembrane segments spans residues 391–411, 427–447, 459–479, and 505–525; these read LIIQ…LNLL, MIIF…NLPI, FFMQ…KSIF, and YLLP…NYNL. 4 N-linked (GlcNAc...) asparagine glycosylation sites follow: Asn531, Asn686, Asn693, and Asn783.

The protein belongs to the glycosyltransferase 117 (GT117) family.

It is found in the endoplasmic reticulum membrane. It catalyses the reaction a di-trans,poly-cis-dolichyl beta-D-mannosyl phosphate + L-seryl-[protein] = 3-O-(alpha-D-mannosyl)-L-seryl-[protein] + a di-trans,poly-cis-dolichyl phosphate + H(+). The catalysed reaction is a di-trans,poly-cis-dolichyl beta-D-mannosyl phosphate + L-threonyl-[protein] = 3-O-(alpha-D-mannosyl)-L-threonyl-[protein] + a di-trans,poly-cis-dolichyl phosphate + H(+). In terms of biological role, O-mannosyl-transferase that transfers mannosyl residues to the hydroxyl group of serine or threonine residues of proteins. The chain is Protein O-mannosyl-transferase tmem260 from Dictyostelium discoideum (Social amoeba).